A 481-amino-acid chain; its full sequence is Dihydrolipoyl dehydrogenase (481 aa).

FAD is bound by residues 34–42 (EREHMGGIC) and lysine 51. A disulfide bond links cysteine 42 and cysteine 47. NAD(+) is bound by residues 195 to 199 (GSGAI), glutamate 218, and 284 to 287 (AVGV). The FAD site is built by aspartate 326 and alanine 334. Histidine 460 acts as the Proton acceptor in catalysis.

It belongs to the class-I pyridine nucleotide-disulfide oxidoreductase family. Homodimer. FAD serves as cofactor.

Its subcellular location is the cytoplasm. It catalyses the reaction N(6)-[(R)-dihydrolipoyl]-L-lysyl-[protein] + NAD(+) = N(6)-[(R)-lipoyl]-L-lysyl-[protein] + NADH + H(+). Lipoamide dehydrogenase is a component of the alpha-ketoacid dehydrogenase complexes. The protein is Dihydrolipoyl dehydrogenase (lpdA) of Rhizobium etli (strain ATCC 51251 / DSM 11541 / JCM 21823 / NBRC 15573 / CFN 42).